The chain runs to 952 residues: Microtubule-associated protein 6 (952 aa).

The segment at 1–15 (MAWPCITRACCIARF) is calmodulin-binding. 3 S-palmitoyl cysteine lipidation sites follow: Cys5, Cys10, and Cys11. Disordered regions lie at residues 37–457 (TEHP…RAVA) and 486–952 (IKPV…EGSP). The segment covering 41–55 (GAPPQPPAPPQPGLA) has biased composition (pro residues). Phosphoserine is present on Ser98. The segment covering 105–117 (ASGSTSGSGPADS) has biased composition (low complexity). The mn 1 stretch occupies residues 116–139 (DSVMRQDYRAWKVQRPEPSCRPRS). Residues 119 to 139 (MRQDYRAWKVQRPEPSCRPRS) are compositionally biased toward basic and acidic residues. The calmodulin-binding stretch occupies residues 124 to 138 (RAWKVQRPEPSCRPR). Tyr141 is subject to Phosphotyrosine. Positions 147–171 (PFERETQYQKDFRAWPLPRRGDHPW) are enriched in basic and acidic residues. The mn 2 stretch occupies residues 151 to 174 (ETQYQKDFRAWPLPRRGDHPWIPK). Residues 160–174 (AWPLPRRGDHPWIPK) form a calmodulin-binding region. Phosphoserine is present on Ser185. The calmodulin-binding stretch occupies residues 187 to 201 (PVLGMPKRRPQSQER). Ser207 is subject to Phosphoserine. A compositionally biased stretch (low complexity) spans 221–230 (VPAAGKASGA). Residues 222-267 (PAAGKASGADQRDTRRKAGPAWMVTRTEGHEEKPLPPAQSQTQEGG) form a Mc-1 repeat. Residues 222-451 (PAAGKASGAD…HAQGTGPEGG (230 aa)) form a 5 X approximate tandem repeat Mc region. Calmodulin-binding stretches follow at residues 235 to 249 (TRRKAGPAWMVTRTE), 280 to 294 (DTRRKAGPAWMVTRT), 325 to 339 (RDTRRKAGPAWMVTR), 373 to 387 (TRRKAGPAWMVTRTE), 421 to 435 (RKAGPAWMVRRSEGH), 481 to 495 (RAWTDIKPVKPIKAK), 532 to 546 (RRRIRSLYSEPFKES), and 559 to 573 (PKKTSTSQKPLRKAK). One copy of the Mc-2 repeat lies at 268–313 (PAAGKASGADQRDTRRKAGPAWMVTRTEGHEEKPLPPAQSQTQEGG). The Mc-3 repeat unit spans residues 314-359 (PAAGKASGADQRDTRRKAGPAWMVTRTEGHEETPLPPAQSQTQEGG). Residues 360 to 405 (PAAGKASGADQRDTRRKAGPAWMVTRTEGHEETPLPPAQSQTQEGG) form a Mc-4 repeat. A Mc-5 repeat occupies 406 to 451 (PAAGKASGADERDTRRKAGPAWMVRRSEGHEQTTAAHAQGTGPEGG). The mn 3 stretch occupies residues 473–496 (SSSYRNEFRAWTDIKPVKPIKAKP). Over residues 542–551 (PFKESPKVEK) the composition is skewed to basic and acidic residues. Positions 552–567 (PSVQSSKPKKTSTSQK) are enriched in low complexity. Ser590 carries the phosphoserine modification. The span at 595–621 (KPDDKEQSKEMNNKLAEAKESRVKPTS) shows a compositional bias: basic and acidic residues. Ser681 is modified (phosphoserine). Residues 711-725 (KDQDHMASELLKNKD) show a composition bias toward basic and acidic residues. A Phosphoserine modification is found at Ser736. Positions 761–775 (APAPTPLKDPGPVIP) are enriched in pro residues. Composition is skewed to basic and acidic residues over residues 776-792 (EPEKDGAPMVPERRKDQ) and 821-831 (PAKDTGTDLKG). A compositionally biased stretch (pro residues) spans 903–915 (VPAPTKDPGPTAP). Ser951 is subject to Phosphoserine.

It belongs to the STOP family. As to quaternary structure, interacts with calmodulin (via C-terminus); the interaction is dependent on Ca(2+). Interacts (via C-terminus) with TMEM106B (via N-terminus). Interacts with ZDHHC13 (via ANK repeats). Interacts with ZDHHC17 (via ANK repeats). Post-translationally, palmitoylated. Probably depalmitoylated by ABHD17A, ABHD17B and ABHD17C. During neuronal polarization, palmitoylation and depalmitoylation cycles regulate MAP6 shuttling between secretory vesicles and microtubules, and its polarized distribution in the axon. As to expression, isoform 1 is specifically expressed in adult brain. Isoform 2 is predominantly expressed in embryonic brain; expression persists at low levels in the adult brain.

It is found in the cytoplasm. The protein resides in the cytoskeleton. The protein localises to the golgi apparatus. It localises to the cell projection. Its subcellular location is the axon. It is found in the dendrite. The protein resides in the cytoplasmic vesicle. The protein localises to the secretory vesicle membrane. Involved in microtubule stabilization in many cell types, including neuronal cells. Specifically has microtubule cold stabilizing activity. Involved in dendrite morphogenesis and maintenance by regulating lysosomal trafficking via its interaction with TMEM106B. Regulates KIF5A-mediated axonal cargo transport. Regulates axonal growth during neuron polarization. The polypeptide is Microtubule-associated protein 6 (Map6) (Rattus norvegicus (Rat)).